A 158-amino-acid polypeptide reads, in one-letter code: NAD(P)H-quinone oxidoreductase subunit J, chloroplastic (158 aa).

The protein belongs to the complex I 30 kDa subunit family. As to quaternary structure, NDH is composed of at least 16 different subunits, 5 of which are encoded in the nucleus.

The protein localises to the plastid. The protein resides in the chloroplast thylakoid membrane. The enzyme catalyses a plastoquinone + NADH + (n+1) H(+)(in) = a plastoquinol + NAD(+) + n H(+)(out). It catalyses the reaction a plastoquinone + NADPH + (n+1) H(+)(in) = a plastoquinol + NADP(+) + n H(+)(out). In terms of biological role, NDH shuttles electrons from NAD(P)H:plastoquinone, via FMN and iron-sulfur (Fe-S) centers, to quinones in the photosynthetic chain and possibly in a chloroplast respiratory chain. The immediate electron acceptor for the enzyme in this species is believed to be plastoquinone. Couples the redox reaction to proton translocation, and thus conserves the redox energy in a proton gradient. The protein is NAD(P)H-quinone oxidoreductase subunit J, chloroplastic of Guizotia abyssinica (Niger).